Consider the following 180-residue polypeptide: dCTP deaminase, dUMP-forming (180 aa).

Residues 96–101, Asp113, 121–123, Gln142, Tyr156, and Gln163 contribute to the dCTP site; these read RSSLGR and TLE. The Proton donor/acceptor role is filled by Glu123.

This sequence belongs to the dCTP deaminase family. In terms of assembly, homotrimer.

It carries out the reaction dCTP + 2 H2O = dUMP + NH4(+) + diphosphate. The protein operates within pyrimidine metabolism; dUMP biosynthesis; dUMP from dCTP: step 1/1. Bifunctional enzyme that catalyzes both the deamination of dCTP to dUTP and the hydrolysis of dUTP to dUMP without releasing the toxic dUTP intermediate. This chain is dCTP deaminase, dUMP-forming, found in Aquifex aeolicus (strain VF5).